The chain runs to 364 residues: PDZ and LIM domain protein 3 (364 aa).

One can recognise a PDZ domain in the interval 1 to 84 (MPQTVILPGP…QLCLKIDRGE (84 aa)). Residues Ser-18, Ser-93, and Ser-264 each carry the phosphoserine modification. Positions 292 to 351 (PLCDKCGSGIVGAVVKARDKYRHPECFVCADCNLNLKQKGYFFIEGELYCETHARARTKP) constitute an LIM zinc-binding domain.

In terms of assembly, interacts with ACTN2. Forms a heterodimer with PDLIM4 (via LIM domain). As to expression, isoform 1 is highly expressed in differentiated skeletal muscle. Isoform 2 is heart-specific.

Its subcellular location is the cytoplasm. The protein localises to the myofibril. The protein resides in the sarcomere. It is found in the z line. May play a role in the organization of actin filament arrays within muscle cells. This Homo sapiens (Human) protein is PDZ and LIM domain protein 3 (PDLIM3).